Here is a 606-residue protein sequence, read N- to C-terminus: Gamma-aminobutyric acid receptor subunit beta (606 aa).

A signal peptide spans 1–44 (MSDSKMDKLARMAPLPRTPLLTIWLAINMALIAQETGHKRIHTV). The Extracellular segment spans residues 45–268 (QAATGGGSML…CEIQFVRSMG (224 aa)). The N-linked (GlcNAc...) asparagine glycan is linked to Asn58. Cys185 and Cys199 are disulfide-bonded. A glycan (N-linked (GlcNAc...) asparagine) is linked at Asn253. 3 helical membrane-spanning segments follow: residues 269–291 (YYLI…SFWL), 297–316 (PARV…LMSS), and 333–356 (YLGT…YMAK). The Cytoplasmic portion of the chain corresponds to 357–568 (RIQMRKQRFM…LGITPSDIDK (212 aa)). 2 disordered regions span residues 376–451 (KQQL…VSNR) and 482–542 (HDPK…AAVP). Low complexity predominate over residues 381 to 395 (GANQQQANPNPNANV). The segment covering 396 to 425 (GGPGGVGVGPGGPGGPGGGVNVGVGMGMGP) has biased composition (gly residues). Basic residues predominate over residues 430–443 (GHGHHAHSHGHPHA). Residues 499–536 (GGRGGPQSHGPGPGQGGGPPGGGGGGGGGGGPPEGGGD) are compositionally biased toward gly residues. A helical membrane pass occupies residues 569–590 (YSRIVFPVCFVCFNLMYWIIYL).

Belongs to the ligand-gated ion channel (TC 1.A.9) family. Gamma-aminobutyric acid receptor (TC 1.A.9.5) subfamily. In terms of assembly, forms oligomers. Interacts with Nlg4; the interaction mediates Rdl clustering. Interacts with Fbxl4; the interaction mediates Rdl degradation. Expressed in different parts of the brain: the mushroom bodies (alpha, alpha', beta, beta', gamma lobes and peduncles), the neurons projecting to the columnar-type neuron LC9 optic glomerulus, in interneurons connecting the paired olfactory lobes, antennal lobes, PDF-expressing small and large ventral lateral neurons (LNvs) of the circadian clock and lobula columnar neuron 11 (LC11) (at protein level). Expressed in all major ON pathway medulla neurons (Mi1, Tm3, Mi4, and Mi9) and in OFF pathway neurons (Tm1, Tm2, Tm4, and Tm9).

The protein resides in the cell membrane. It is found in the postsynaptic cell membrane. It localises to the cell projection. The protein localises to the dendrite. Its subcellular location is the axon. With respect to regulation, activated by agonist muscimol. Insensitive to zinc, glycine, glutamate, and baclofen, loreclezole, to antagonist bicuculline, glycine-receptor antagonist strychnine, and nonselective GABA and glycine antagonist RU 5135. Insensitive to flunitrazepam, pentobarbitone or pregnane steroids such as 5alpha-pregnan-3alpha-ol-20-one. Inhibited by insecticides picrotoxin (PTX), cyclodiene dieldrin, TBPS and lindane. Inhibited by ivermectin, fipronil and pyrafluprole. Its activity is regulated as follows. Inhibited by insecticides picrotoxin (PTX). Gamma-aminobutyric acid (GABA) receptor voltage channel subunit. GABA, an inhibitory neurotransmitter, mediates neuronal inhibition by binding to the GABA receptor and opening an integral chloride channel. Together with glutamate receptor GluClalpha, plays an important role in the visual response by regulating the activity of ON/OFF-selective neurons. Plays a role in promoting sleep and sleep latency by regulating the activity of peptidergic PDF neurons. In large ventral lateral clock neurons, clustering is mediated by Nlg4 and protein levels undergo daily degradation in response to the circadian clock. In neurons in the mushroom bodies, has a role in odor memory acquisition where it inhibits appetitive and aversive olfactory learning, probably upstream of Adcy1/adenylate cyclase 1 and GTPase activating protein Nf1. In male-specific GABAergic neurons, plays a role in inhibiting male aggressive behavior during courtship. Functionally, gamma-aminobutyric acid (GABA) receptor voltage channel subunit. This Drosophila melanogaster (Fruit fly) protein is Gamma-aminobutyric acid receptor subunit beta (Rdl).